The sequence spans 78 residues: Apolipoprotein C-I (78 aa).

An N-terminal signal peptide occupies residues 1–26 (MRLILWLPVLVVVLLMVLEGPAPAQG).

The protein belongs to the apolipoprotein C1 family.

The protein localises to the secreted. Inhibitor of lipoprotein binding to the low density lipoprotein (LDL) receptor, LDL receptor-related protein, and very low density lipoprotein (VLDL) receptor. Associates with high density lipoproteins (HDL) and the triacylglycerol-rich lipoproteins in the plasma and makes up about 10% of the protein of the VLDL and 2% of that of HDL. Appears to interfere directly with fatty acid uptake and is also the major plasma inhibitor of cholesteryl ester transfer protein (CETP). Binds free fatty acids and reduces their intracellular esterification. Modulates the interaction of APOE with beta-migrating VLDL and inhibits binding of beta-VLDL to the LDL receptor-related protein. This Puma concolor (Mountain lion) protein is Apolipoprotein C-I (APOC1).